The following is a 715-amino-acid chain: Elongation factor G (715 aa).

A tr-type G domain is found at 12–309 (RRVRNIGIMA…GVIDYLPSPL (298 aa)). GTP is bound by residues 21-28 (AHIDAGKT), 108-112 (DTPGH), and 162-165 (NKMD).

The protein belongs to the TRAFAC class translation factor GTPase superfamily. Classic translation factor GTPase family. EF-G/EF-2 subfamily.

Its subcellular location is the cytoplasm. Its function is as follows. Catalyzes the GTP-dependent ribosomal translocation step during translation elongation. During this step, the ribosome changes from the pre-translocational (PRE) to the post-translocational (POST) state as the newly formed A-site-bound peptidyl-tRNA and P-site-bound deacylated tRNA move to the P and E sites, respectively. Catalyzes the coordinated movement of the two tRNA molecules, the mRNA and conformational changes in the ribosome. The polypeptide is Elongation factor G (Rubrobacter xylanophilus (strain DSM 9941 / JCM 11954 / NBRC 16129 / PRD-1)).